The sequence spans 98 residues: Large ribosomal subunit protein uL23 (98 aa).

It belongs to the universal ribosomal protein uL23 family. In terms of assembly, part of the 50S ribosomal subunit. Contacts protein L29, and trigger factor when it is bound to the ribosome.

Functionally, one of the early assembly proteins it binds 23S rRNA. One of the proteins that surrounds the polypeptide exit tunnel on the outside of the ribosome. Forms the main docking site for trigger factor binding to the ribosome. The sequence is that of Large ribosomal subunit protein uL23 from Frankia casuarinae (strain DSM 45818 / CECT 9043 / HFP020203 / CcI3).